A 5762-amino-acid polypeptide reads, in one-letter code: Mucin-5B (5762 aa).

Residues 1-25 form the signal peptide; the sequence is MGAPSACRTLVLALAAMLVVPQAET. The disordered stretch occupies residues 27-50; sequence GPVEPSWENAGHTMDGGAPTSSPT. One can recognise a VWFD 1 domain in the interval 75-245; that stretch reads RVCSTWGDFH…KLDGPTEQCP (171 aa). 2 cysteine pairs are disulfide-bonded: Cys-77/Cys-207 and Cys-99/Cys-244. Residue Asn-145 is glycosylated (N-linked (GlcNAc...) asparagine). Position 194 (Glu-194) interacts with Cu(2+). Residues Asn-201 and Asn-254 are each glycosylated (N-linked (GlcNAc...) asparagine). 2 residues coordinate Cu(2+): His-311 and His-358. In terms of domain architecture, TIL 1 spans 329–385; that stretch reads CPLNMQHQECGSPCTDTCSNPQRAQLCEDHCVDGCFCPPGTVLDDITHSGCLPLGQC. N-linked (GlcNAc...) asparagine glycosylation occurs at Asn-401. In terms of domain architecture, VWFD 2 spans 423 to 598; the sequence is GTCSVQGGAH…NTWKAQAACA (176 aa). 3 disulfide bridges follow: Cys-425/Cys-562, Cys-447/Cys-597, and Cys-469/Cys-477. N-linked (GlcNAc...) asparagine glycosylation occurs at Asn-515. TIL domains lie at 695–752 and 805–855; these read CPKS…AQEC and NSSA…EEDC. N-linked (GlcNAc...) asparagine glycosylation occurs at Asn-805. The VWFC 1 domain occupies 855-927; sequence CPCVHNEATY…EYILAQDYCG (73 aa). The 170-residue stretch at 893–1062 folds into the VWFD 3 domain; sequence GTCVAYGDGH…NSWKLSPSCP (170 aa). Disulfide bonds link Cys-895–Cys-1026, Cys-917–Cys-1061, Cys-926–Cys-1023, and Cys-944–Cys-951. Residue Asn-929 is glycosylated (N-linked (GlcNAc...) asparagine). N-linked (GlcNAc...) asparagine glycans are attached at residues Asn-1276 and Asn-1292. Residues 1333–1432 form a Cys-rich subdomain 1 repeat; that stretch reads CVREVCRWSS…RVLCCEYVPC (100 aa). The 7 X Cys-rich subdomain repeats stretch occupies residues 1333 to 4228; the sequence is CVREVCRWSS…RVFCCNYGHC (2896 aa). Residue Trp-1340 is glycosylated (C-linked (Man) tryptophan). Disordered stretches follow at residues 1437 to 1462 and 1480 to 1502; these read APGT…QTTA and LTSQ…GTTT. Positions 1450-1462 are enriched in low complexity; sequence TEPAVPTPTQTTA. A Cys-rich subdomain 2 repeat occupies 1503-1604; that stretch reads CQPRCQWTEW…VLCCSDDHCR (102 aa). A glycan (C-linked (Man) tryptophan) is linked at Trp-1509. N-linked (GlcNAc...) asparagine glycosylation occurs at Asn-1556. Residues 1607–1783 are disordered; sequence ATTPPPTTEL…NTTTSQGTTR (177 aa). Low complexity predominate over residues 1614–1624; the sequence is TELETATTTTT. Polar residues-rich tracts occupy residues 1625–1638 and 1645–1662; these read QALF…SSPG and ASTT…SPRY. Residues 1663–1684 show a composition bias toward low complexity; it reads TSTLGTATTGGPTTPAGSTEPT. The segment covering 1689–1706 has biased composition (polar residues); the sequence is ATSTLPTRSALPGTTGSL. Low complexity-rich tracts occupy residues 1739–1756 and 1765–1777; these read EPLT…LSTS and TETT…NTTT. Residue Asn-1774 is glycosylated (N-linked (GlcNAc...) asparagine). One copy of the Cys-rich subdomain 3 repeat lies at 1784–1885; it reads CQPKCEWTEW…VLCCDDYSHC (102 aa). Trp-1790 carries a C-linked (Man) tryptophan glycan. Residues 1890–1987 show a composition bias toward low complexity; sequence ATSSTATPSS…TSVTPIPSSS (98 aa). 4 disordered regions span residues 1890-2019, 2031-2100, 2114-2211, and 2242-2302; these read ATSS…TAHT, GATG…GTTH, TGSM…HTVR, and TGTT…SSPT. The interval 1890 to 2199 is 11 X approximate tandem repeats, Ser/Thr-rich; sequence ATSSTATPSS…VPNTMATTHG (310 aa). Residues 1988 to 1997 are compositionally biased toward polar residues; sequence LGTTWTRLSQ. Over residues 1998 to 2019 the composition is skewed to low complexity; that stretch reads TTTPTATMSTATPSSTPETAHT. Over residues 2114 to 2181 the composition is skewed to low complexity; sequence TGSMATPSSS…TSNTVTPSSA (68 aa). Polar residues predominate over residues 2182–2199; it reads LGTTHTPPVPNTMATTHG. The Cys-rich subdomain 4 repeat unit spans residues 2313–2414; that stretch reads GCEPQCAWSE…RVFCCNYGHC (102 aa). Trp-2320 carries C-linked (Man) tryptophan glycosylation. The segment at 2419–2756 is 11 X approximate tandem repeats, Ser/Thr-rich; it reads ATSSTAMPSS…VPNTTATTHG (338 aa). Disordered regions lie at residues 2443-2462, 2473-2522, and 2556-2861; these read ATTT…PGTT, TVTV…ATAL, and TTPT…PTSA. Positions 2556-2738 are enriched in low complexity; it reads TTPTATMSTA…TSSTVTPSSA (183 aa). Residues 2739–2786 show a composition bias toward polar residues; that stretch reads LGTTHTPPVPNTTATTHGRSLSPSSPHTVRTAWTSATSGTLGTTHITE. Asn-2749 carries N-linked (GlcNAc...) asparagine glycosylation. Positions 2787–2861 are enriched in low complexity; the sequence is PSTGTSHTPA…TLLPSSPTSA (75 aa). The stretch at 2854–2886 is one HAT 1 repeat; it reads LPSSPTSAPITTVVTMGCEPQCAWSEWLDYSYP. One copy of the Cys-rich subdomain 5 repeat lies at 2871-2971; that stretch reads CEPQCAWSEW…RVFCCNYGHC (101 aa). Trp-2877 carries C-linked (Man) tryptophan glycosylation. The 17 X approximate tandem repeats, Ser/Thr-rich stretch occupies residues 2976–3456; that stretch reads ATSSTATPSS…VPNTTATTHG (481 aa). Composition is skewed to low complexity over residues 3001-3017 and 3026-3049; these read TTTA…STPG and TSTA…RTAT. Disordered stretches follow at residues 3001–3049, 3256–3357, 3371–3469, and 3481–3561; these read TTTA…RTAT, TTPT…GTTH, TGSM…TVRT, and TTHI…PTSA. Residues 3371–3438 are compositionally biased toward low complexity; the sequence is TGSMATPSSS…TSSTVTPSSA (68 aa). Over residues 3439–3456 the composition is skewed to polar residues; the sequence is LGTTHTPPVPNTTATTHG. N-linked (GlcNAc...) asparagine glycosylation is present at Asn-3449. Low complexity predominate over residues 3487–3561; the sequence is PSTVTSHTPA…TLLPSSPTSA (75 aa). One copy of the HAT 2 repeat lies at 3554–3586; sequence LPSSPTSAPITTVVTTGCEPQCAWSEWLDYSYP. The Cys-rich subdomain 6 repeat unit spans residues 3571–3671; the sequence is CEPQCAWSEW…RVFCCNYGHC (101 aa). Residue Trp-3577 is glycosylated (C-linked (Man) tryptophan). The 11 X approximate tandem repeats, Ser/Thr-rich stretch occupies residues 3676 to 4013; sequence ATSSTATPSS…VPNTTATTHG (338 aa). Disordered stretches follow at residues 3699-3779, 3813-3917, and 3956-4118; these read TATT…ATAL, TTPT…HTPT, and ATGS…PTSA. Low complexity predominate over residues 3956-3995; sequence ATGSTTNPSSTPGTTPIPPVLTTTATTPAATSSTVTPSSA. Polar residues predominate over residues 3996–4043; sequence LGTTHTPPVPNTTATTHGRSLSPSSPHTVRTAWTSATSGTLGTTHITE. The N-linked (GlcNAc...) asparagine glycan is linked to Asn-4006. Positions 4044–4118 are enriched in low complexity; it reads PSTGTSHTPA…TLLPSSPTSA (75 aa). An HAT 3 repeat occupies 4111 to 4143; the sequence is LPSSPTSAPITTVVTTGCEPQCAWSEWLDYSYP. One copy of the Cys-rich subdomain 7 repeat lies at 4128–4228; it reads CEPQCAWSEW…RVFCCNYGHC (101 aa). Residue Trp-4134 is glycosylated (C-linked (Man) tryptophan). The segment at 4233–4879 is 23 X approximate tandem repeats, Ser/Thr-rich; it reads ATSSTAMPSS…TLGTAHTPKV (647 aa). 2 stretches are compositionally biased toward low complexity: residues 4259–4274 and 4283–4389; these read TTAS…STPG and TSPA…PGTT. Disordered stretches follow at residues 4259 to 4389, 4428 to 4447, 4458 to 4527, and 4541 to 4750; these read TTAS…PGTT, ATTT…PGTT, TVTV…AIPS, and TTPT…ATSF. Asn-4804, Asn-4960, Asn-5017, Asn-5024, Asn-5046, Asn-5096, and Asn-5111 each carry an N-linked (GlcNAc...) asparagine glycan. A VWFD 4 domain is found at 5073–5261; it reads CICSMWGGSH…VPDSRKDGCW (189 aa). 3 cysteine pairs are disulfide-bonded: Cys-5075–Cys-5221, Cys-5097–Cys-5260, and Cys-5121–Cys-5132. Residue Asn-5215 is glycosylated (N-linked (GlcNAc...) asparagine). The VWFC 2 domain occupies 5412-5484; it reads CPCVGPDGFP…NPCCPETVCV (73 aa). N-linked (GlcNAc...) asparagine glycans are attached at residues Asn-5486, Asn-5526, Asn-5565, Asn-5566, Asn-5602, Asn-5612, Asn-5663, Asn-5677, and Asn-5721. Residues 5521–5587 form the VWFC 3 domain; sequence QLCSYNGTFY…VAGQCCGECV (67 aa). Disulfide bonds link Cys-5653/Cys-5705, Cys-5672/Cys-5719, Cys-5681/Cys-5735, and Cys-5685/Cys-5737. Residues 5653-5742 form the CTCK domain; that stretch reads CEEDSCQVRI…DECGCTPFCV (90 aa).

In terms of assembly, homomultimer; disulfide-linked. The N- and C-terminus mediate their assembly into higher order structures to form filaments. The CTCK domains of two polypeptides associate in the endoplasmic reticulum to generate intermolecularly disulfide-bonded dimers. These dimers progress to the Golgi apparatus, which is a more acidic environment than the endoplasmic reticulum. Under acidic conditions, the N-termini form non-covalent intermolecular interactions that juxtapose assemblies from different CTCK-linked dimers to produce long, disulfide-linked polymers that remain highly compact until secretion. Highly glycosylated. C-, N- and O-glycosylated. C-mannosylated in the Cys-rich subdomains probably on the first Trp residue of the WXXW motif. Highly O-glycosylated in the Ser/Thr-rich tandem repeat (TR) region. The repeat region is about 59% O-glycosylated with a high abundance of NeuAc(2)Hex(1)HexNac1-ol. Expressed on surface airway epithelia. Expressed mainly in mucous cells of submucosal glands of airway tissues. Highly expressed in the sublingual gland. Also found in submaxillary glands, endocervix, gall bladder, and pancreas.

It is found in the secreted. Its function is as follows. Gel-forming mucin that is thought to contribute to the lubricating and viscoelastic properties of whole saliva and cervical mucus. This chain is Mucin-5B (MUC5B), found in Homo sapiens (Human).